The sequence spans 443 residues: MNFLVIGLSHKTAPVELRERISFSSDDPGGVLRAITALPGISEGMILSTCNRVEVYAASGDPAGGCACLQRFMAEHHGLDEAQLKPHLYIHSGRDAIRHLFRVASSLDSMILGEPQILGQLKEAYNLAESSCTAGPVLNRLLPRAFAAAKRVRNETAIAQHAVSVSYAAVELARKIFGDLAGKSVMIVGAGKMCELAARHLTGQNIGEVLVTNRTLARAQSLAEQFGGRAIPFAEFPLYLNQADIVLTSTAAGGLLLTRAQLEQIIRQRKNRPMFLIDIAVPRNIDPEVNHIDNVYLYDIDDLNGVIETNLRERRKAAKKAEDIIEQEIVRFYSWLRSLEATPMIVALRRQVEDIRRTETEKTLGSLQHLDAGDRRAVEALTRAIVNKVLHSPLSVLKRAGDDITGEIYLEAVRRLFDLNPDSQQTGGDSVEKDADSKQDLTS.

Residues 49–52 (TCNR), Ser109, 114–116 (EPQ), and Gln120 contribute to the substrate site. The active-site Nucleophile is the Cys50. An NADP(+)-binding site is contributed by 189–194 (GAGKMC). Residues 421–443 (PDSQQTGGDSVEKDADSKQDLTS) form a disordered region. Residues 430–443 (SVEKDADSKQDLTS) show a composition bias toward basic and acidic residues.

It belongs to the glutamyl-tRNA reductase family. Homodimer.

The enzyme catalyses (S)-4-amino-5-oxopentanoate + tRNA(Glu) + NADP(+) = L-glutamyl-tRNA(Glu) + NADPH + H(+). It functions in the pathway porphyrin-containing compound metabolism; protoporphyrin-IX biosynthesis; 5-aminolevulinate from L-glutamyl-tRNA(Glu): step 1/2. Functionally, catalyzes the NADPH-dependent reduction of glutamyl-tRNA(Glu) to glutamate 1-semialdehyde (GSA). This chain is Glutamyl-tRNA reductase, found in Syntrophotalea carbinolica (strain DSM 2380 / NBRC 103641 / GraBd1) (Pelobacter carbinolicus).